The primary structure comprises 120 residues: Proteinase inhibitor (120 aa).

An N-terminal signal peptide occupies residues 1 to 19 (MKQLIIATLLSALSGGCMA). A disulfide bridge connects residues Cys-43 and Cys-65.

Belongs to the protease inhibitor I38 family. Monomer.

It localises to the periplasm. Functionally, inhibitor of the extracellular proteases A, B, and C of E.chrysanthemi and the S.marcescens 50 kDa extracellular protease. It forms a non-covalent bond with the proteases and may prevent autocatalytic cleavage of the proteases zymogen in the periplasm. In Dickeya chrysanthemi (Pectobacterium chrysanthemi), this protein is Proteinase inhibitor (inh).